Consider the following 179-residue polypeptide: MRAKLDLFTHLLLEWGSVHNLSGAKNHQDIEHNIQDSLQVLDFIAPFKSCLDIGSGAGFPAIPLSLACSNARFILLEPNAKKVAFLHHVKLALNLNNLEIQRMRIEHVSPQSVLVDLITSRALMNAQNLIALSAPFLREQGHFLFYKGSHLRTEIACADHECHVYGKRVYFYSQRRDFA.

Residues G54, F59, 105–106 (IE), and R121 each bind S-adenosyl-L-methionine.

It belongs to the methyltransferase superfamily. RNA methyltransferase RsmG family.

Its subcellular location is the cytoplasm. It catalyses the reaction guanosine(527) in 16S rRNA + S-adenosyl-L-methionine = N(7)-methylguanosine(527) in 16S rRNA + S-adenosyl-L-homocysteine. Specifically methylates the N7 position of guanine in position 527 of 16S rRNA. This is Ribosomal RNA small subunit methyltransferase G from Helicobacter bizzozeronii.